The sequence spans 727 residues: Catalase-peroxidase (727 aa).

The disordered stretch occupies residues 1-26 (MDTKVETGGKCPVAHGPAGAKGRGNR). The tryptophyl-tyrosyl-methioninium (Trp-Tyr) (with M-245) cross-link spans 97 to 219 (WHSAGTYRIT…LGAVQMGLIY (123 aa)). His-98 serves as the catalytic Proton acceptor. The tryptophyl-tyrosyl-methioninium (Tyr-Met) (with W-97) cross-link spans 219–245 (YVNPEGPNGNPDPIAAARDIRETFSRM). Heme b is bound at residue His-260.

It belongs to the peroxidase family. Peroxidase/catalase subfamily. As to quaternary structure, homodimer or homotetramer. Heme b is required as a cofactor. In terms of processing, formation of the three residue Trp-Tyr-Met cross-link is important for the catalase, but not the peroxidase activity of the enzyme.

The enzyme catalyses H2O2 + AH2 = A + 2 H2O. It catalyses the reaction 2 H2O2 = O2 + 2 H2O. Its function is as follows. Bifunctional enzyme with both catalase and broad-spectrum peroxidase activity. This chain is Catalase-peroxidase, found in Allorhizobium ampelinum (strain ATCC BAA-846 / DSM 112012 / S4) (Agrobacterium vitis (strain S4)).